A 559-amino-acid polypeptide reads, in one-letter code: MPPKKAAPKKLHELAPEVRVGLKIDDISKKTYIVGKQFATGGFGRIHTCTEDGKSQQMVMKIEPSTNGPLLTEVVVFNRILKKDMIENYKKAKKIQWIGLPHLIANGYFTYNNEKMRYMIIPKYATSLEAVREANGGSLSAKDSLTVADCVLGALEYLHDSDYAHADVKAANILLEKPNDFSSAVLVDFGLAHRTTNNVDKPDKKRAHNGTCIFTSTDAHRGNNPSFRGDVEILAYNLIMWISGSLPWLSLEASPDKVFEAKQKFVGGLPGTLQSILTNQPAPVAGCITTMFDVSRKTDYTHKVDMAKLRKKVTEAAQSASTGAQKKPKMTPSRDTTATPKRKSQRAPRVESEDEEEEEKKEVEIKPKKKVQRSRKVVEDDDEEEEVIIPKSTRSRKTKEEGTPRSFNLGMTSSTATSDRVAKKIEMKYKRLATNKPSLVPVTVADASSCESQYESNEPGPSSRVVKKRTSEERDANGEVQLKTPALVSPDVKKTKYKSGISSATKASPTELRRVPGVRNFPKGRRSMIIKETSARYQEKRATRNTKPTFDDSSCSSEV.

The Protein kinase domain occupies 32–388 (YIVGKQFATG…EDDDEEEEVI (357 aa)). Residues 38 to 46 (FATGGFGRI) and Lys-61 each bind ATP. The Proton acceptor role is filled by Asp-167. Disordered stretches follow at residues 315-419 (EAAQ…ATSD) and 448-559 (SSCE…SSEV). 2 stretches are compositionally biased toward polar residues: residues 405–418 (RSFN…TATS) and 449–460 (SCESQYESNEPG). Residues 533–542 (TSARYQEKRA) show a composition bias toward basic and acidic residues. Residues 545-559 (NTKPTFDDSSCSSEV) are compositionally biased toward polar residues.

The protein belongs to the protein kinase superfamily. CK1 Ser/Thr protein kinase family. VRK subfamily. In terms of processing, autophosphorylates in vitro.

It is found in the nucleus. Its subcellular location is the cytoplasm. It localises to the cajal body. It carries out the reaction L-seryl-[protein] + ATP = O-phospho-L-seryl-[protein] + ADP + H(+). The enzyme catalyses L-threonyl-[protein] + ATP = O-phospho-L-threonyl-[protein] + ADP + H(+). Functionally, serine/threonine kinase that phosphorylates baf-1, thus regulating the association of baf-1 with chromatin and nuclear membrane proteins during nuclear envelope formation. May act through the egl-17 signaling pathway. Essential in hermaphrodites for formation of the vulva, uterus, and uterine seam cells and for development and maintenance of the somatic gonad and thus the germ line. Acts to prevent cep-1 from triggering an inappropriate cell cycle arrest, thereby promoting germ cell proliferation. Regulates anchor cell polarity and the timing of anchor cell invasion through the basement membranes separating vulval and somatic gonadal cells during the L3 larval stage. The sequence is that of Serine/threonine-protein kinase VRK1 from Caenorhabditis briggsae.